The chain runs to 105 residues: Large ribosomal subunit protein uL24 (105 aa).

It belongs to the universal ribosomal protein uL24 family. Part of the 50S ribosomal subunit.

Functionally, one of two assembly initiator proteins, it binds directly to the 5'-end of the 23S rRNA, where it nucleates assembly of the 50S subunit. In terms of biological role, one of the proteins that surrounds the polypeptide exit tunnel on the outside of the subunit. The chain is Large ribosomal subunit protein uL24 from Staphylococcus epidermidis (strain ATCC 35984 / DSM 28319 / BCRC 17069 / CCUG 31568 / BM 3577 / RP62A).